The primary structure comprises 125 residues: uncharacterized protein (125 aa).

This is an uncharacterized protein from Saccharomyces cerevisiae (strain ATCC 204508 / S288c) (Baker's yeast).